An 869-amino-acid polypeptide reads, in one-letter code: DNA mismatch repair protein MutS (869 aa).

618 to 625 is a binding site for ATP; sequence GPNMGGKS.

It belongs to the DNA mismatch repair MutS family.

In terms of biological role, this protein is involved in the repair of mismatches in DNA. It is possible that it carries out the mismatch recognition step. This protein has a weak ATPase activity. In Zymomonas mobilis subsp. mobilis (strain ATCC 31821 / ZM4 / CP4), this protein is DNA mismatch repair protein MutS.